Consider the following 357-residue polypeptide: Heat-inducible transcription repressor HrcA (357 aa).

Belongs to the HrcA family.

Negative regulator of class I heat shock genes (grpE-dnaK-dnaJ and groELS operons). Prevents heat-shock induction of these operons. This Ureaplasma parvum serovar 3 (strain ATCC 27815 / 27 / NCTC 11736) protein is Heat-inducible transcription repressor HrcA.